We begin with the raw amino-acid sequence, 429 residues long: Bifunctional protein GlmU (429 aa).

The segment at Met-1 to Lys-223 is pyrophosphorylase. Residues Leu-8 to Gly-11, Lys-22, and Gly-81 to Thr-82 each bind UDP-N-acetyl-alpha-D-glucosamine. Asp-102 contributes to the Mg(2+) binding site. Positions 135, 149, 164, and 221 each coordinate UDP-N-acetyl-alpha-D-glucosamine. Asn-221 is a binding site for Mg(2+). Residues Phe-224–Gln-244 form a linker region. Residues Gly-245–Lys-429 are N-acetyltransferase. The UDP-N-acetyl-alpha-D-glucosamine site is built by Arg-308 and Lys-325. His-336 (proton acceptor) is an active-site residue. UDP-N-acetyl-alpha-D-glucosamine is bound by residues Tyr-339 and Asn-350. Acetyl-CoA is bound by residues Asn-359 to Tyr-360, Ser-378, Ala-396, and Arg-413.

This sequence in the N-terminal section; belongs to the N-acetylglucosamine-1-phosphate uridyltransferase family. In the C-terminal section; belongs to the transferase hexapeptide repeat family. In terms of assembly, homotrimer. It depends on Mg(2+) as a cofactor.

The protein localises to the cytoplasm. It carries out the reaction alpha-D-glucosamine 1-phosphate + acetyl-CoA = N-acetyl-alpha-D-glucosamine 1-phosphate + CoA + H(+). The catalysed reaction is N-acetyl-alpha-D-glucosamine 1-phosphate + UTP + H(+) = UDP-N-acetyl-alpha-D-glucosamine + diphosphate. The protein operates within nucleotide-sugar biosynthesis; UDP-N-acetyl-alpha-D-glucosamine biosynthesis; N-acetyl-alpha-D-glucosamine 1-phosphate from alpha-D-glucosamine 6-phosphate (route II): step 2/2. It functions in the pathway nucleotide-sugar biosynthesis; UDP-N-acetyl-alpha-D-glucosamine biosynthesis; UDP-N-acetyl-alpha-D-glucosamine from N-acetyl-alpha-D-glucosamine 1-phosphate: step 1/1. It participates in bacterial outer membrane biogenesis; LPS lipid A biosynthesis. In terms of biological role, catalyzes the last two sequential reactions in the de novo biosynthetic pathway for UDP-N-acetylglucosamine (UDP-GlcNAc). The C-terminal domain catalyzes the transfer of acetyl group from acetyl coenzyme A to glucosamine-1-phosphate (GlcN-1-P) to produce N-acetylglucosamine-1-phosphate (GlcNAc-1-P), which is converted into UDP-GlcNAc by the transfer of uridine 5-monophosphate (from uridine 5-triphosphate), a reaction catalyzed by the N-terminal domain. The polypeptide is Bifunctional protein GlmU (Campylobacter jejuni subsp. jejuni serotype O:23/36 (strain 81-176)).